The primary structure comprises 232 residues: uncharacterized protein (232 aa).

Disordered regions lie at residues 123-147 (VAGG…RKYP) and 169-200 (AAAD…PSLR).

The protein belongs to the mycobacterial PPE family.

This is an uncharacterized protein from Mycobacterium tuberculosis (strain ATCC 25618 / H37Rv).